The following is a 216-amino-acid chain: Elongation factor Ts (216 aa).

The segment at 81–84 (TDFV) is involved in Mg(2+) ion dislocation from EF-Tu.

The protein belongs to the EF-Ts family.

It localises to the cytoplasm. Functionally, associates with the EF-Tu.GDP complex and induces the exchange of GDP to GTP. It remains bound to the aminoacyl-tRNA.EF-Tu.GTP complex up to the GTP hydrolysis stage on the ribosome. The chain is Elongation factor Ts from Geotalea uraniireducens (strain Rf4) (Geobacter uraniireducens).